The following is a 450-amino-acid chain: Phosphoglucosamine mutase (450 aa).

Residue Ser-101 is the Phosphoserine intermediate of the active site. Mg(2+) is bound by residues Ser-101, Asp-242, Asp-244, and Asp-246. Residue Ser-101 is modified to Phosphoserine.

The protein belongs to the phosphohexose mutase family. It depends on Mg(2+) as a cofactor. Post-translationally, activated by phosphorylation.

The catalysed reaction is alpha-D-glucosamine 1-phosphate = D-glucosamine 6-phosphate. Its function is as follows. Catalyzes the conversion of glucosamine-6-phosphate to glucosamine-1-phosphate. In Rhodopseudomonas palustris (strain BisA53), this protein is Phosphoglucosamine mutase.